Reading from the N-terminus, the 171-residue chain is 3-hydroxydecanoyl-[acyl-carrier-protein] dehydratase (171 aa).

His-70 is an active-site residue.

The protein belongs to the thioester dehydratase family. FabA subfamily. In terms of assembly, homodimer.

It localises to the cytoplasm. It carries out the reaction a (3R)-hydroxyacyl-[ACP] = a (2E)-enoyl-[ACP] + H2O. The catalysed reaction is (3R)-hydroxydecanoyl-[ACP] = (2E)-decenoyl-[ACP] + H2O. It catalyses the reaction (2E)-decenoyl-[ACP] = (3Z)-decenoyl-[ACP]. It functions in the pathway lipid metabolism; fatty acid biosynthesis. In terms of biological role, necessary for the introduction of cis unsaturation into fatty acids. Catalyzes the dehydration of (3R)-3-hydroxydecanoyl-ACP to E-(2)-decenoyl-ACP and then its isomerization to Z-(3)-decenoyl-ACP. Can catalyze the dehydratase reaction for beta-hydroxyacyl-ACPs with saturated chain lengths up to 16:0, being most active on intermediate chain length. The protein is 3-hydroxydecanoyl-[acyl-carrier-protein] dehydratase of Xanthomonas oryzae pv. oryzae (strain MAFF 311018).